The following is an 87-amino-acid chain: U15-lycotoxin-Ls1f (87 aa).

The first 20 residues, 1-20 (MNSKIFAVLLLLAFLSCVLS), serve as a signal peptide directing secretion. A WAP domain is found at 21–66 (DQYCPKSSITACKKMNIRNDCCKDDDCTGGSWCCATPCGNFCKYPT). Disulfide bonds link cysteine 24-cysteine 54, cysteine 32-cysteine 58, cysteine 41-cysteine 53, cysteine 42-cysteine 80, and cysteine 47-cysteine 62.

This sequence belongs to the venom protein 11 family. 01 (wap-1) subfamily. Post-translationally, contains 5 disulfide bonds. In terms of tissue distribution, expressed by the venom gland.

Its subcellular location is the secreted. In terms of biological role, has antibacterial activity. In Lycosa singoriensis (Wolf spider), this protein is U15-lycotoxin-Ls1f.